The following is a 331-amino-acid chain: uncharacterized protein (331 aa).

WD repeat units follow at residues Lys53–Val92, Gln97–Arg139, Ala144–Asp184, and Ala300–Val331.

It is found in the cytoplasm. Its subcellular location is the nucleus. This is an uncharacterized protein from Schizosaccharomyces pombe (strain 972 / ATCC 24843) (Fission yeast).